The primary structure comprises 292 residues: Zinc finger protein OZF (292 aa).

10 C2H2-type zinc fingers span residues 16 to 38 (FACKVCGKIFSHKSTLTEHEHFH), 44 to 66 (FECNECGKAFSQKQYVIKHQNTH), 72 to 94 (LECNECGKSFSQKENLLTHQKIH), 100 to 122 (FECKDCGKAFIQKSNLIRHQRTH), 128 to 150 (FICKECGKTFSGKSNLTEHEKIH), 156 to 178 (FKCNECGTAFGQKKYLIKHQNIH), 184 to 206 (YECNECGKAFSQRTSLIVHVRIH), 212 to 234 (YECNVCGKAFSQSSSLTVHVRSH), 240 to 262 (YGCNECGKAFSQFSTLALHLRIH), and 268 to 290 (YQCSECGKAFSQKSHHIRHQKIH). Glycyl lysine isopeptide (Lys-Gly) (interchain with G-Cter in SUMO2) cross-links involve residues Lys-28, Lys-51, and Lys-56. Residues Lys-157 and Lys-169 each participate in a glycyl lysine isopeptide (Lys-Gly) (interchain with G-Cter in SUMO) cross-link. A Glycyl lysine isopeptide (Lys-Gly) (interchain with G-Cter in SUMO2) cross-link involves residue Lys-173. The tract at residues 212 to 292 (YECNVCGKAF…HIRHQKIHTH (81 aa)) is interaction with TERF2IP.

Belongs to the krueppel C2H2-type zinc-finger protein family. As to quaternary structure, binds DNA. Interacts with SUMO conjugating enzyme UBC9/UBE2I. Interacts with the telomeric protein TERF2IP.

The protein resides in the nucleus. The polypeptide is Zinc finger protein OZF (ZNF146) (Bos taurus (Bovine)).